A 127-amino-acid chain; its full sequence is uncharacterized protein (127 aa).

This is an uncharacterized protein from Human cytomegalovirus (strain Toledo) (HHV-5).